We begin with the raw amino-acid sequence, 838 residues long: Serine/threonine-protein phosphatase 4 regulatory subunit 3 (838 aa).

Disordered stretches follow at residues 452 to 482 (NNCN…SPSR) and 745 to 838 (AINK…SESS). Over residues 747–761 (NKQQDNNGERNTTTG) the composition is skewed to polar residues. Over residues 783 to 792 (SDGENNENNE) the composition is skewed to acidic residues.

As to quaternary structure, regulatory subunit 3 (R3) of the histone H2A phosphatase complex (HTP-C) consisting of PPH3, PSY2 and PSY4.

Its subcellular location is the nucleus. Core regulatory subunit of the histone H2A phosphatase complex, which dephosphorylates H2AS128ph (gamma-H2A) that has been displaced from sites of DNA lesions in the double-stranded DNA break repair process. Dephosphorylation is necessary for efficient recovery from the DNA damage checkpoint. This chain is Serine/threonine-protein phosphatase 4 regulatory subunit 3 (PSY2), found in Eremothecium gossypii (strain ATCC 10895 / CBS 109.51 / FGSC 9923 / NRRL Y-1056) (Yeast).